The sequence spans 236 residues: Purine nucleoside phosphorylase DeoD-type 2 (236 aa).

His5 lines the a purine D-ribonucleoside pocket. Residues Gly21, Arg25, Arg44, and Arg88 to Ser91 contribute to the phosphate site. A purine D-ribonucleoside contacts are provided by residues Asp180–Glu182 and Ser204–Asp205. The active-site Proton donor is Asp205.

The protein belongs to the PNP/UDP phosphorylase family. Homohexamer; trimer of homodimers.

The catalysed reaction is a purine D-ribonucleoside + phosphate = a purine nucleobase + alpha-D-ribose 1-phosphate. The enzyme catalyses a purine 2'-deoxy-D-ribonucleoside + phosphate = a purine nucleobase + 2-deoxy-alpha-D-ribose 1-phosphate. Functionally, catalyzes the reversible phosphorolytic breakdown of the N-glycosidic bond in the beta-(deoxy)ribonucleoside molecules, with the formation of the corresponding free purine bases and pentose-1-phosphate. In Vibrio cholerae serotype O1 (strain ATCC 39315 / El Tor Inaba N16961), this protein is Purine nucleoside phosphorylase DeoD-type 2.